A 72-amino-acid polypeptide reads, in one-letter code: Large ribosomal subunit protein bL31c (72 aa).

The protein belongs to the bacterial ribosomal protein bL31 family. Type A subfamily. Part of the 50S ribosomal subunit.

The protein localises to the plastid. Its subcellular location is the chloroplast. Functionally, binds the 23S rRNA. The chain is Large ribosomal subunit protein bL31c (rpl31) from Thalassiosira pseudonana (Marine diatom).